We begin with the raw amino-acid sequence, 565 residues long: Proline--tRNA ligase (565 aa).

It belongs to the class-II aminoacyl-tRNA synthetase family. ProS type 1 subfamily. Homodimer.

It is found in the cytoplasm. The catalysed reaction is tRNA(Pro) + L-proline + ATP = L-prolyl-tRNA(Pro) + AMP + diphosphate. Catalyzes the attachment of proline to tRNA(Pro) in a two-step reaction: proline is first activated by ATP to form Pro-AMP and then transferred to the acceptor end of tRNA(Pro). As ProRS can inadvertently accommodate and process non-cognate amino acids such as alanine and cysteine, to avoid such errors it has two additional distinct editing activities against alanine. One activity is designated as 'pretransfer' editing and involves the tRNA(Pro)-independent hydrolysis of activated Ala-AMP. The other activity is designated 'posttransfer' editing and involves deacylation of mischarged Ala-tRNA(Pro). The misacylated Cys-tRNA(Pro) is not edited by ProRS. This is Proline--tRNA ligase from Hydrogenobaculum sp. (strain Y04AAS1).